A 270-amino-acid chain; its full sequence is Putative phosphoenolpyruvate synthase regulatory protein (270 aa).

Residue 150–157 (GVSRCGKT) coordinates ADP.

This sequence belongs to the pyruvate, phosphate/water dikinase regulatory protein family. PSRP subfamily.

It carries out the reaction [pyruvate, water dikinase] + ADP = [pyruvate, water dikinase]-phosphate + AMP + H(+). The enzyme catalyses [pyruvate, water dikinase]-phosphate + phosphate + H(+) = [pyruvate, water dikinase] + diphosphate. In terms of biological role, bifunctional serine/threonine kinase and phosphorylase involved in the regulation of the phosphoenolpyruvate synthase (PEPS) by catalyzing its phosphorylation/dephosphorylation. This is Putative phosphoenolpyruvate synthase regulatory protein from Shewanella sediminis (strain HAW-EB3).